The following is a 984-amino-acid chain: Probable beta-galactosidase C (984 aa).

The signal sequence occupies residues 1 to 19 (MRLLNIFTTLCLLLWSGAA). Residues tyrosine 78, asparagine 123, alanine 124, glutamate 125, and asparagine 183 each contribute to the substrate site. Glutamate 184 functions as the Proton donor in the catalytic mechanism. A substrate-binding site is contributed by tyrosine 247. Cysteine 253 and cysteine 300 are oxidised to a cystine. An N-linked (GlcNAc...) asparagine glycan is attached at asparagine 272. Glutamate 283 serves as the catalytic Nucleophile. Tyrosine 349 provides a ligand contact to substrate. N-linked (GlcNAc...) asparagine glycosylation is found at asparagine 387, asparagine 433, asparagine 462, asparagine 516, asparagine 583, asparagine 599, asparagine 673, asparagine 716, asparagine 756, asparagine 860, and asparagine 870.

The protein belongs to the glycosyl hydrolase 35 family.

It is found in the secreted. The catalysed reaction is Hydrolysis of terminal non-reducing beta-D-galactose residues in beta-D-galactosides.. Its function is as follows. Cleaves beta-linked terminal galactosyl residues from gangliosides, glycoproteins, and glycosaminoglycans. In Sclerotinia sclerotiorum (strain ATCC 18683 / 1980 / Ss-1) (White mold), this protein is Probable beta-galactosidase C (lacC).